A 774-amino-acid chain; its full sequence is Cilium assembly protein DZIP1L (774 aa).

A C2H2-type zinc finger spans residues 166–189; it reads HTCHLCDKTFMNATFLRGHIQRRH. Residues 204–450 adopt a coiled-coil conformation; the sequence is LGEVLEELRA…RKVLAALRKN (247 aa). Disordered regions lie at residues 415–435, 515–674, and 686–774; these read MPKA…ASLE, NKEV…ASSG, and KQLE…IPGW. Acidic residues predominate over residues 421-433; the sequence is TEEDSSEEELEAS. 2 positions are modified to phosphoserine: Ser-425 and Ser-426. Positions 515-526 are enriched in basic and acidic residues; it reads NKEVSSRVKQRW. Residues 597–616 are compositionally biased toward low complexity; the sequence is GPSSTPVSPGSGLSSTPPFS.

The protein belongs to the DZIP C2H2-type zinc-finger protein family. As to quaternary structure, interacts with SEPTIN2.

The protein resides in the cytoplasm. It is found in the cytoskeleton. The protein localises to the cilium basal body. It localises to the microtubule organizing center. Its subcellular location is the centrosome. The protein resides in the centriole. In terms of biological role, involved in primary cilium formation. Probably acts as a transition zone protein required for localization of PKD1/PC1 and PKD2/PC2 to the ciliary membrane. This Mus musculus (Mouse) protein is Cilium assembly protein DZIP1L.